Here is a 403-residue protein sequence, read N- to C-terminus: Accessory Sec system protein translocase subunit SecY2 (403 aa).

Transmembrane regions (helical) follow at residues 17–37 (MLYTCFILFIYILGTNISIVS), 63–83 (LNIFTLGLVPWLTSMIILMLI), 105–125 (ILTLILSVIQSYFVIHEYVSK), 131–151 (DNIYLTILILVTGTMLLVWLA), 157–177 (YGIAGPMPIVMVSIIKSMMHQ), 186–206 (HIVIALLIILVIITLFILLFI), 240–260 (ITLMMSISAFVFLKSGIHFIL), 276–296 (FDSPVGISVYLVIQMLLGYFL), 339–359 (WFGSALVTVIIGIPLYFTLFV), and 366–386 (IYFSVQLIVLVYISINIAETI).

The protein belongs to the SecY/SEC61-alpha family. SecY2 subfamily. Component of the accessory SecA2/SecY2 protein translocase complex required to export cell wall proteins. May form heterotrimers with SecE and SecG subunits.

The protein resides in the cell membrane. Functionally, part of the accessory SecA2/SecY2 system specifically required for export of possible cell wall proteins. The central subunit of a protein translocation channel. The polypeptide is Accessory Sec system protein translocase subunit SecY2 (Staphylococcus aureus (strain N315)).